The sequence spans 182 residues: MIFDEFTLKSQIRAVPDFPKPGVVFRDITPLFQSPRALRMTVDSFVQRYIEADFSHIGAMDARGFLIGSAVAYALNKPLVLFRKQGKLPADVLAEGYQTEYGEAFLEVHADSLCEGDSVLIFDDLIATGGTLLAAASLVRRLGARVFEAAAIIDLPELGGSTRLQDAGISTFSLTAFALDER.

The protein belongs to the purine/pyrimidine phosphoribosyltransferase family. As to quaternary structure, homodimer.

It is found in the cytoplasm. The enzyme catalyses AMP + diphosphate = 5-phospho-alpha-D-ribose 1-diphosphate + adenine. The protein operates within purine metabolism; AMP biosynthesis via salvage pathway; AMP from adenine: step 1/1. In terms of biological role, catalyzes a salvage reaction resulting in the formation of AMP, that is energically less costly than de novo synthesis. This is Adenine phosphoribosyltransferase from Pseudomonas aeruginosa (strain LESB58).